The primary structure comprises 83 residues: UPF0248 protein PYRAB10580 (83 aa).

Belongs to the UPF0248 family.

In Pyrococcus abyssi (strain GE5 / Orsay), this protein is UPF0248 protein PYRAB10580.